Consider the following 325-residue polypeptide: DNA-directed RNA polymerase subunit alpha (325 aa).

The alpha N-terminal domain (alpha-NTD) stretch occupies residues 1–231; it reads MQNSLLKPRI…DQLNVFAALE (231 aa). Residues 246 to 325 form an alpha C-terminal domain (alpha-CTD) region; that stretch reads VDPILLRPVD…ENWPPAGLEK (80 aa).

This sequence belongs to the RNA polymerase alpha chain family. Homodimer. The RNAP catalytic core consists of 2 alpha, 1 beta, 1 beta' and 1 omega subunit. When a sigma factor is associated with the core the holoenzyme is formed, which can initiate transcription.

It carries out the reaction RNA(n) + a ribonucleoside 5'-triphosphate = RNA(n+1) + diphosphate. In terms of biological role, DNA-dependent RNA polymerase catalyzes the transcription of DNA into RNA using the four ribonucleoside triphosphates as substrates. This is DNA-directed RNA polymerase subunit alpha from Janthinobacterium sp. (strain Marseille) (Minibacterium massiliensis).